A 166-amino-acid chain; its full sequence is Small ribosomal subunit protein uS5 (166 aa).

In terms of domain architecture, S5 DRBM spans 11–74 (LEDRVVAINR…DAARKNLIEV (64 aa)).

This sequence belongs to the universal ribosomal protein uS5 family. Part of the 30S ribosomal subunit. Contacts proteins S4 and S8.

With S4 and S12 plays an important role in translational accuracy. Its function is as follows. Located at the back of the 30S subunit body where it stabilizes the conformation of the head with respect to the body. The sequence is that of Small ribosomal subunit protein uS5 from Ligilactobacillus salivarius (strain UCC118) (Lactobacillus salivarius).